The chain runs to 354 residues: MRVHEEASEDKEREVEEAPDLMPLSPPLTAAATAAVVAVAGQRLVVGYALTKKKVKSFLQPKLLSLARKKSIHFVSIDETRPLSEQGPFDIILHKLTDKEWQQVLEDYREEHPEVTVLDPPNAIQHLHNRQSMLQEVADLNLSNAYGEVCTPRQLVIMKDPLSIPSAVAKAGLTLPLVAKPLVVDGTSKSHELSLAYVETSLSMLDPPLVLQEFVNHGGILFKVYVVGETIRVVRRFSLPDVNIYDLENNDGIFRFPRVSCATNTAEDAEVDPSIAELPPKPLLEKLGRELRRRLGLRLFNFDMIREHGRKDRYYVIDINYFPGYGKMPGYEHIFIDFLLSLVQNKYKRRLSGS.

Residues 1–16 show a composition bias toward basic and acidic residues; sequence MRVHEEASEDKEREVE. The tract at residues 1–24 is disordered; sequence MRVHEEASEDKEREVEEAPDLMPL. 2 residues coordinate 1D-myo-inositol 1,3,4-trisphosphate: K53 and K95. The ATP site is built by R130 and K180. Positions 140–347 constitute an ATP-grasp domain; that stretch reads LNLSNAYGEV…FLLSLVQNKY (208 aa). Positions 191 and 223 each coordinate 1D-myo-inositol 1,3,4-trisphosphate. ATP is bound by residues 212–223 and S238; that span reads QEFVNHGGILFK. Positions 303, 318, and 320 each coordinate Mg(2+). A 1D-myo-inositol 1,3,4-trisphosphate-binding site is contributed by N320.

The protein belongs to the ITPK1 family. Monomer. Requires Mg(2+) as cofactor. Expressed in roots, leaves, flowers, anthers and embryos.

It carries out the reaction 1D-myo-inositol 3,4,5,6-tetrakisphosphate + ATP = 1D-myo-inositol 1,3,4,5,6-pentakisphosphate + ADP + H(+). The enzyme catalyses 1D-myo-inositol 1,3,4-trisphosphate + ATP = 1D-myo-inositol 1,3,4,5-tetrakisphosphate + ADP + H(+). It catalyses the reaction 1D-myo-inositol 1,3,4-trisphosphate + ATP = 1D-myo-inositol 1,3,4,6-tetrakisphosphate + ADP + H(+). Kinase that can phosphorylate various inositol polyphosphate such as Ins(3,4,5,6)P4 or Ins(1,3,4)P3 and participates in phytic acid biosynthesis in developing seeds. Phytic acid is the primary storage form of phosphorus in cereal grains and other plant seeds. The chain is Inositol-tetrakisphosphate 1-kinase 1 from Oryza sativa subsp. japonica (Rice).